Reading from the N-terminus, the 296-residue chain is Sulfotransferase 6B1 (296 aa).

Residue histidine 112 is the Proton acceptor of the active site. Residues arginine 134, serine 142, tyrosine 197, and 253 to 255 (RKG) contribute to the 3'-phosphoadenylyl sulfate site.

Belongs to the sulfotransferase 1 family.

The protein localises to the cytoplasm. It localises to the cytosol. It carries out the reaction thyroxine + 3'-phosphoadenylyl sulfate = thyroxine sulfate + adenosine 3',5'-bisphosphate + H(+). Its activity is regulated as follows. Strongly inhibited by the divalent metal cations Fe(2+), Hg(2+), Co(2+), Zn(2+), Cu(2+) and Cd(2+). In terms of biological role, sulfotransferase that utilizes 3'-phospho-5'-adenylyl sulfate (PAPS) as sulfonate donor to catalyze the sulfate conjugation of a variety of xenobiotic and endogenous compounds, including dopamine, T3 (triiodo-L-thyronine), T4 (thyroxine), flavonoids, isoflavonoids, and other phenolic compounds. This Danio rerio (Zebrafish) protein is Sulfotransferase 6B1.